The following is a 98-amino-acid chain: Large ribosomal subunit protein uL23 (98 aa).

Belongs to the universal ribosomal protein uL23 family. In terms of assembly, part of the 50S ribosomal subunit. Contacts protein L29, and trigger factor when it is bound to the ribosome.

One of the early assembly proteins it binds 23S rRNA. One of the proteins that surrounds the polypeptide exit tunnel on the outside of the ribosome. Forms the main docking site for trigger factor binding to the ribosome. In Streptococcus pneumoniae serotype 19F (strain G54), this protein is Large ribosomal subunit protein uL23.